The chain runs to 249 residues: Metallo-beta-lactamase type 2 (249 aa).

Residues 1–22 (MLKKIKISLILALGLTSLQAFG) form the signal peptide. Zn(2+) is bound by residues histidine 98, histidine 100, aspartate 102, histidine 161, and cysteine 180. Residue lysine 183 coordinates substrate. Histidine 222 is a Zn(2+) binding site.

The protein belongs to the metallo-beta-lactamase superfamily. Class-B beta-lactamase family. Monomer. Requires Zn(2+) as cofactor.

Its subcellular location is the periplasm. It catalyses the reaction a beta-lactam + H2O = a substituted beta-amino acid. Its activity is regulated as follows. Inhibited by chelating agents such as EDTA, 1-10 phenanthroline and pyridine-2,6-dicarboxylic acid. Functionally, confers resistance to the different beta-lactams antibiotics (penicillin, cephalosporin and carbapenem) via the hydrolysis of the beta-lactam ring. This is Metallo-beta-lactamase type 2 (blaB1) from Elizabethkingia meningoseptica (Chryseobacterium meningosepticum).